We begin with the raw amino-acid sequence, 589 residues long: V-type ATP synthase alpha chain (589 aa).

239–246 is an ATP binding site; that stretch reads GPFGAGKT.

It belongs to the ATPase alpha/beta chains family.

It carries out the reaction ATP + H2O + 4 H(+)(in) = ADP + phosphate + 5 H(+)(out). Functionally, produces ATP from ADP in the presence of a proton gradient across the membrane. The V-type alpha chain is a catalytic subunit. The protein is V-type ATP synthase alpha chain of Treponema denticola (strain ATCC 35405 / DSM 14222 / CIP 103919 / JCM 8153 / KCTC 15104).